We begin with the raw amino-acid sequence, 346 residues long: Biotin synthase (346 aa).

The Radical SAM core domain occupies 38–256 (RQVQVSTLLS…IAIARIMMPT (219 aa)). [4Fe-4S] cluster contacts are provided by cysteine 53, cysteine 57, and cysteine 60. [2Fe-2S] cluster is bound by residues cysteine 97, cysteine 128, cysteine 188, and arginine 260.

The protein belongs to the radical SAM superfamily. Biotin synthase family. As to quaternary structure, homodimer. It depends on [4Fe-4S] cluster as a cofactor. The cofactor is [2Fe-2S] cluster.

It carries out the reaction (4R,5S)-dethiobiotin + (sulfur carrier)-SH + 2 reduced [2Fe-2S]-[ferredoxin] + 2 S-adenosyl-L-methionine = (sulfur carrier)-H + biotin + 2 5'-deoxyadenosine + 2 L-methionine + 2 oxidized [2Fe-2S]-[ferredoxin]. Its pathway is cofactor biosynthesis; biotin biosynthesis; biotin from 7,8-diaminononanoate: step 2/2. Catalyzes the conversion of dethiobiotin (DTB) to biotin by the insertion of a sulfur atom into dethiobiotin via a radical-based mechanism. The sequence is that of Biotin synthase from Klebsiella pneumoniae (strain 342).